A 469-amino-acid chain; its full sequence is 3-isopropylmalate dehydratase large subunit (469 aa).

Positions 349, 410, and 413 each coordinate [4Fe-4S] cluster.

This sequence belongs to the aconitase/IPM isomerase family. LeuC type 1 subfamily. As to quaternary structure, heterodimer of LeuC and LeuD. The cofactor is [4Fe-4S] cluster.

It carries out the reaction (2R,3S)-3-isopropylmalate = (2S)-2-isopropylmalate. Its pathway is amino-acid biosynthesis; L-leucine biosynthesis; L-leucine from 3-methyl-2-oxobutanoate: step 2/4. Functionally, catalyzes the isomerization between 2-isopropylmalate and 3-isopropylmalate, via the formation of 2-isopropylmaleate. This is 3-isopropylmalate dehydratase large subunit from Neisseria gonorrhoeae (strain ATCC 700825 / FA 1090).